The following is a 348-amino-acid chain: Nicotinate-nucleotide--dimethylbenzimidazole phosphoribosyltransferase (348 aa).

The active-site Proton acceptor is the Glu-316.

The protein belongs to the CobT family.

It carries out the reaction 5,6-dimethylbenzimidazole + nicotinate beta-D-ribonucleotide = alpha-ribazole 5'-phosphate + nicotinate + H(+). It functions in the pathway nucleoside biosynthesis; alpha-ribazole biosynthesis; alpha-ribazole from 5,6-dimethylbenzimidazole: step 1/2. Functionally, catalyzes the synthesis of alpha-ribazole-5'-phosphate from nicotinate mononucleotide (NAMN) and 5,6-dimethylbenzimidazole (DMB). The sequence is that of Nicotinate-nucleotide--dimethylbenzimidazole phosphoribosyltransferase from Xanthomonas axonopodis pv. citri (strain 306).